The following is an 852-amino-acid chain: DNA double-strand break repair Rad50 ATPase (852 aa).

12 residues coordinate ATP: asparagine 32, glycine 33, alanine 34, glycine 35, lysine 36, serine 37, serine 38, arginine 53, tyrosine 54, aspartate 59, valine 61, and arginine 63. Residue serine 37 coordinates Mg(2+). Residue glutamine 142 coordinates Mg(2+). Coiled-coil stretches lie at residues glutamate 155–aspartate 345 and leucine 389–serine 427. Residues leucine 389–leucine 488 form the Zinc-hook domain. The Zn(2+) site is built by cysteine 435 and cysteine 438. Coiled-coil stretches lie at residues aspartate 460–leucine 488 and lysine 534–lysine 711. Aspartate 797 provides a ligand contact to Mg(2+).

Belongs to the SMC family. RAD50 subfamily. As to quaternary structure, homodimer. Forms a complex with Mre11. Zn(2+) serves as cofactor.

It carries out the reaction ATP + H2O = ADP + phosphate + H(+). In terms of biological role, involved in DNA double-strand break repair (DSBR). The Rad50/Mre11 complex possesses single-strand endonuclease activity and ATP-dependent double-strand-specific 3'-5' exonuclease activity. Rad50 provides an ATP-dependent control of Mre11 by positioning DNA ends into the Mre11 active site: ATP-binding induces a large structural change from an open form with accessible Mre11 nuclease sites into a closed form. The chain is DNA double-strand break repair Rad50 ATPase from Thermotoga maritima (strain ATCC 43589 / DSM 3109 / JCM 10099 / NBRC 100826 / MSB8).